Here is a 276-residue protein sequence, read N- to C-terminus: Homeobox protein TOS8 (276 aa).

Polar residues predominate over residues 176-185 (NSVRGSNNGY). Residues 176-199 (NSVRGSNNGYSAKEKKHKAHGKRS) are disordered. Over residues 189-199 (EKKHKAHGKRS) the composition is skewed to basic residues. A DNA-binding region (homeobox; TALE-type) is located at residues 194-256 (AHGKRSNLPK…NARRRKIFSG (63 aa)).

This sequence belongs to the TALE/CUP9 homeobox family.

The protein resides in the nucleus. This chain is Homeobox protein TOS8 (TOS8), found in Saccharomyces cerevisiae (strain ATCC 204508 / S288c) (Baker's yeast).